A 62-amino-acid chain; its full sequence is Ranacyclin-T (62 aa).

Positions 1–22 (MFTMKKTLLVLFFLGVVSLSLC) are cleaved as a signal peptide. Positions 23-43 (VEERDADEEDGGEVMEEEVKR) are excised as a propeptide. Cys49 and Cys59 are oxidised to a cystine. A Lysine amide modification is found at Lys60.

It belongs to the frog skin active peptide (FSAP) family. Brevinin subfamily. In terms of tissue distribution, expressed by the skin granular glands.

Its subcellular location is the secreted. In terms of biological role, has antibacterial activity against Gram-positive bacteria B.megaterium Bm11, S.lentus and M.luteus, and Gram-negative bacteria E.coli D22, Y.pseudotuberculosis YP III and P.syringae pv tabaci, and antifungal activity against C.albicans ATCC 10231, C.tropicalis, C.guiller-mondii and P.nicotianae spores. Has weak hemolytic activity. The mature peptide inserts into the hydrophobic core of the bacterial cell membrane and increases permeability without disrupting membrane integrity. Probably binds to the outer membrane surface before aggregating to form transmembrane pores. The polypeptide is Ranacyclin-T (RNCT) (Rana temporaria (European common frog)).